A 328-amino-acid polypeptide reads, in one-letter code: Lateral signaling target 1 protein (328 aa).

3 disordered regions span residues 56-78 (SSQD…GLRS), 108-135 (PTHY…SASS), and 177-200 (PVQP…RLNG). Positions 178 to 200 (VQPSTSTSRNNVSQISGSSRLNG) are enriched in polar residues.

In terms of assembly, interacts with fbf-2; the interaction probably mediates the release of the C-terminal tail of fbf-2 from the RNA-binding domain, thereby altering its RNA-binding affinity.

In terms of biological role, plays a role in germline stem cell maintenance, perhaps acting in concert with mRNA-binding factor fbf-2. May regulate fbf-2 by modulating RNA-binding and perhaps by competition with the intramolecular interaction between the fbf-2 RNA-binding domain and C-terminal tail. The sequence is that of Lateral signaling target 1 protein from Caenorhabditis elegans.